Here is a 309-residue protein sequence, read N- to C-terminus: 4-hydroxy-tetrahydrodipicolinate synthase (309 aa).

A pyruvate-binding site is contributed by threonine 51. Tyrosine 140 functions as the Proton donor/acceptor in the catalytic mechanism. Lysine 168 (schiff-base intermediate with substrate) is an active-site residue. Isoleucine 209 is a pyruvate binding site.

This sequence belongs to the DapA family. In terms of assembly, homotetramer; dimer of dimers.

It localises to the cytoplasm. The enzyme catalyses L-aspartate 4-semialdehyde + pyruvate = (2S,4S)-4-hydroxy-2,3,4,5-tetrahydrodipicolinate + H2O + H(+). It functions in the pathway amino-acid biosynthesis; L-lysine biosynthesis via DAP pathway; (S)-tetrahydrodipicolinate from L-aspartate: step 3/4. Catalyzes the condensation of (S)-aspartate-beta-semialdehyde [(S)-ASA] and pyruvate to 4-hydroxy-tetrahydrodipicolinate (HTPA). This is 4-hydroxy-tetrahydrodipicolinate synthase from Streptococcus uberis (strain ATCC BAA-854 / 0140J).